Here is a 358-residue protein sequence, read N- to C-terminus: Probable RNA methyltransferase MXAN_6459 (358 aa).

The active-site Proton acceptor is the glutamate 92. In terms of domain architecture, Radical SAM core spans phenylalanine 99–lysine 327. Cysteine 106 and cysteine 333 are joined by a disulfide. Residues cysteine 113, cysteine 117, and cysteine 120 each coordinate [4Fe-4S] cluster. S-adenosyl-L-methionine is bound by residues glycine 160–glutamate 161, serine 192, serine 215–threonine 217, and aspartate 289. Cysteine 333 functions as the S-methylcysteine intermediate in the catalytic mechanism.

Belongs to the radical SAM superfamily. RlmN family. [4Fe-4S] cluster is required as a cofactor.

The protein resides in the cytoplasm. The sequence is that of Probable RNA methyltransferase MXAN_6459 from Myxococcus xanthus (strain DK1622).